A 177-amino-acid polypeptide reads, in one-letter code: Large ribosomal subunit protein uL6 (177 aa).

The protein belongs to the universal ribosomal protein uL6 family. In terms of assembly, part of the 50S ribosomal subunit.

Its function is as follows. This protein binds to the 23S rRNA, and is important in its secondary structure. It is located near the subunit interface in the base of the L7/L12 stalk, and near the tRNA binding site of the peptidyltransferase center. The protein is Large ribosomal subunit protein uL6 of Paramagnetospirillum magneticum (strain ATCC 700264 / AMB-1) (Magnetospirillum magneticum).